The following is a 251-amino-acid chain: Segregation and condensation protein A (251 aa).

Belongs to the ScpA family. As to quaternary structure, component of a cohesin-like complex composed of ScpA, ScpB and the Smc homodimer, in which ScpA and ScpB bind to the head domain of Smc. The presence of the three proteins is required for the association of the complex with DNA.

The protein localises to the cytoplasm. Participates in chromosomal partition during cell division. May act via the formation of a condensin-like complex containing Smc and ScpB that pull DNA away from mid-cell into both cell halves. In Bacillus velezensis (strain DSM 23117 / BGSC 10A6 / LMG 26770 / FZB42) (Bacillus amyloliquefaciens subsp. plantarum), this protein is Segregation and condensation protein A.